Here is a 1040-residue protein sequence, read N- to C-terminus: Multidrug resistance protein MdtB (1040 aa).

The next 12 helical transmembrane spans lie at 16-36, 347-367, 369-389, 396-416, 440-460, 472-492, 537-557, 863-883, 888-908, 911-931, 968-988, and 998-1018; these read FIMRPVATTLLMVAILLAGII, LMMAIALVVMIIYLFLRNIPA, IIPGVAVPLSLIGTFAVMVFL, LTLMALTIATGFVVDDAIVVI, IGFTIISLTFSLIAVLIPLLF, FAITLAVAILISAVVSLTLTP, WLTLSVALSTLLLSVLLWVFI, LGSTVWLIVAAVVAMYIVLGI, FIHPITILSTLPTAGVGALLA, IAGSELDVIAIIGIILLIGIV, ILMTTLAALLGALPLMLSTGV, and IGMVGGLIVSQVLTLFTTPVI.

Belongs to the resistance-nodulation-cell division (RND) (TC 2.A.6) family. MdtB subfamily. As to quaternary structure, part of a tripartite efflux system composed of MdtA, MdtB and MdtC. MdtB forms a heteromultimer with MdtC.

Its subcellular location is the cell inner membrane. In terms of biological role, the MdtABC tripartite complex confers resistance against novobiocin and deoxycholate. The chain is Multidrug resistance protein MdtB from Escherichia coli O7:K1 (strain IAI39 / ExPEC).